The primary structure comprises 915 residues: DNA (cytosine-5)-methyltransferase 2 (915 aa).

Over residues 1–14 (MAPSSPSSARPTRA) the composition is skewed to low complexity. A disordered region spans residues 1 to 171 (MAPSSPSSAR…STAANKPEED (171 aa)). The segment covering 15–30 (SGRERSAMAEEIHQNQ) has biased composition (basic and acidic residues). A compositionally biased stretch (basic residues) spans 42-57 (AKRRRKAASSGKKPKP). The segment covering 71–80 (KKGETEKTEP) has biased composition (basic and acidic residues). Acidic residues predominate over residues 81 to 108 (VVDDVCAEEPDEEELAMGEEEAEAEEQA). Low complexity predominate over residues 109 to 119 (MQEVVAAVAAG). One can recognise a BAH domain in the interval 188 to 313 (IVYCLGDDVY…VAYSTFANIS (126 aa)). The span at 315-328 (ENGQSGSETASGIS) shows a compositional bias: polar residues. The interval 315 to 338 (ENGQSGSETASGISSDDAGLETSS) is disordered. One can recognise an SAM-dependent MTase C5-type domain in the interval 345-876 (ATLLDLYSGC…YCLGQAYLGE (532 aa)). The Chromo domain occupies 445–508 (FVVQKLIGIR…EGRKRKILPL (64 aa)). Cys-521 is a catalytic residue.

It belongs to the class I-like SAM-binding methyltransferase superfamily. C5-methyltransferase family.

The protein localises to the nucleus. The enzyme catalyses a 2'-deoxycytidine in DNA + S-adenosyl-L-methionine = a 5-methyl-2'-deoxycytidine in DNA + S-adenosyl-L-homocysteine + H(+). Functionally, may be involved in the CpXpG methylation and in gene silencing. The protein is DNA (cytosine-5)-methyltransferase 2 (ZMET5) of Zea mays (Maize).